The primary structure comprises 36 residues: Pancreatic polypeptide (36 aa).

A Tyrosine amide modification is found at Y36.

The protein belongs to the NPY family.

Its subcellular location is the secreted. Hormone secreted by pancreatic cells that acts as a regulator of pancreatic and gastrointestinal functions probably by signaling through the G protein-coupled receptor NPY4R2. The chain is Pancreatic polypeptide (PPY) from Didelphis virginiana (North American opossum).